The chain runs to 269 residues: uncharacterized protein (269 aa).

The ompR/PhoB-type DNA-binding region spans 3–105; sequence WIINDNIEFW…VPRRGFKIHN (103 aa).

The protein to V.cholerae cholera toxin transcriptional activator (ToxR).

This is an uncharacterized protein from Escherichia coli (strain K12).